Here is a 316-residue protein sequence, read N- to C-terminus: Ribosomal RNA small subunit methyltransferase H (316 aa).

S-adenosyl-L-methionine is bound by residues 35 to 37, aspartate 55, phenylalanine 84, aspartate 105, and glutamine 112; that span reads SGH.

The protein belongs to the methyltransferase superfamily. RsmH family.

It is found in the cytoplasm. It carries out the reaction cytidine(1402) in 16S rRNA + S-adenosyl-L-methionine = N(4)-methylcytidine(1402) in 16S rRNA + S-adenosyl-L-homocysteine + H(+). Specifically methylates the N4 position of cytidine in position 1402 (C1402) of 16S rRNA. The protein is Ribosomal RNA small subunit methyltransferase H of Streptococcus pyogenes serotype M49 (strain NZ131).